The chain runs to 406 residues: 2,3-bisphosphoglycerate-independent phosphoglycerate mutase (406 aa).

It belongs to the BPG-independent phosphoglycerate mutase family. A-PGAM subfamily.

The enzyme catalyses (2R)-2-phosphoglycerate = (2R)-3-phosphoglycerate. Its pathway is carbohydrate degradation; glycolysis; pyruvate from D-glyceraldehyde 3-phosphate: step 3/5. Its function is as follows. Catalyzes the interconversion of 2-phosphoglycerate and 3-phosphoglycerate. In Methanococcus maripaludis (strain C5 / ATCC BAA-1333), this protein is 2,3-bisphosphoglycerate-independent phosphoglycerate mutase.